A 364-amino-acid polypeptide reads, in one-letter code: Aminomethyltransferase (364 aa).

It belongs to the GcvT family. The glycine cleavage system is composed of four proteins: P, T, L and H.

The catalysed reaction is N(6)-[(R)-S(8)-aminomethyldihydrolipoyl]-L-lysyl-[protein] + (6S)-5,6,7,8-tetrahydrofolate = N(6)-[(R)-dihydrolipoyl]-L-lysyl-[protein] + (6R)-5,10-methylene-5,6,7,8-tetrahydrofolate + NH4(+). In terms of biological role, the glycine cleavage system catalyzes the degradation of glycine. The protein is Aminomethyltransferase of Salmonella paratyphi C (strain RKS4594).